The chain runs to 403 residues: Ribosomal RNA large subunit methyltransferase I (403 aa).

Residues 9-88 (YPRLVLSKGR…ESIDIAFFTR (80 aa)) form the PUA domain.

This sequence belongs to the methyltransferase superfamily. RlmI family.

The protein localises to the cytoplasm. The catalysed reaction is cytidine(1962) in 23S rRNA + S-adenosyl-L-methionine = 5-methylcytidine(1962) in 23S rRNA + S-adenosyl-L-homocysteine + H(+). In terms of biological role, specifically methylates the cytosine at position 1962 (m5C1962) of 23S rRNA. The protein is Ribosomal RNA large subunit methyltransferase I of Salmonella paratyphi A (strain ATCC 9150 / SARB42).